We begin with the raw amino-acid sequence, 579 residues long: Effector protein HopAB3 (579 aa).

3 disordered regions span residues Met-1–Val-140, Val-214–Pro-294, and Pro-384–Ala-408. The tract at residues Met-1 to Leu-336 is host recognition; Pto interaction. 5 stretches are compositionally biased toward low complexity: residues Ala-23–Ser-39, Arg-89–Ala-101, Ala-219–Ser-248, Asn-266–Arg-281, and Pro-384–Ser-402. The segment at His-337 to Pro-579 is E3 ubiquitin-protein ligase.

Belongs to the HopAB family. In terms of assembly, interacts physically with plant cell Pto. Post-translationally, auto-ubiquitinated.

The protein localises to the secreted. Effector protein involved in gene-for-gene resistance in tomato plants. It is recognized by the host Pto resistance protein and elicits Pto and Prf-dependent hypersensitive response (HR) and programmed cell death (PCD), resulting in host immunity. In susceptible plants, acts as a virulence factor by suppressing PCD and HR-based plant immunity. This function requires its E3 ubiquitin ligase activity probably by recruiting E2 enzymes and transferring ubiquitin molecules to cellular proteins involved in regulation of PCD and targeting them for degradation. Enhances the development of disease symptoms and bacterial growth. This chain is Effector protein HopAB3 (hopAB3), found in Pseudomonas syringae pv. tomato.